The primary structure comprises 252 residues: JmjC domain-containing protein A (252 aa).

The JmjC domain maps to 103–252; the sequence is PYLRNFGMLD…VSCWGKEMIM (150 aa).

The chain is JmjC domain-containing protein A (jcdA) from Dictyostelium discoideum (Social amoeba).